A 242-amino-acid polypeptide reads, in one-letter code: Small ribosomal subunit protein uS7m (242 aa).

A mitochondrion-targeting transit peptide spans 1-37; it reads MAAPTAKVSRGWSGLALGVRIAVLRLPGLTQVRWSRY. At Lys-228 the chain carries N6-acetyllysine.

The protein belongs to the universal ribosomal protein uS7 family. Component of the mitochondrial ribosome small subunit (28S) which comprises a 12S rRNA and about 30 distinct proteins.

Its subcellular location is the mitochondrion. The sequence is that of Small ribosomal subunit protein uS7m (MRPS7) from Bos taurus (Bovine).